Reading from the N-terminus, the 282-residue chain is Glutamyl endopeptidase (282 aa).

A signal peptide spans 1–27 (MKKRFLSICTMTIAALATTTMVNTSYA). The propeptide occupies 28 to 66 (KTDTESHNHSSLGTENKNVLDINSSSHNIKPSQNKSYPS). Catalysis depends on charge relay system residues His117, Asp159, and Ser235.

The protein belongs to the peptidase S1B family. As to quaternary structure, monomer.

The protein resides in the secreted. It carries out the reaction Preferential cleavage: Glu-|-Xaa, Asp-|-Xaa.. With respect to regulation, inhibited by diisopropyl fluorophosphate. In terms of biological role, exhibits a significant hydrolytic activity for the carbonyl side of glutamic acid. Shows activity toward human fibronectin and type 1 collagen. The polypeptide is Glutamyl endopeptidase (gseA) (Staphylococcus epidermidis).